Reading from the N-terminus, the 314-residue chain is tRNA dimethylallyltransferase (314 aa).

Position 40–47 (40–47 (GPTASGKS)) interacts with ATP. Residue 42–47 (TASGKS) participates in substrate binding.

The protein belongs to the IPP transferase family. Monomer. It depends on Mg(2+) as a cofactor.

The enzyme catalyses adenosine(37) in tRNA + dimethylallyl diphosphate = N(6)-dimethylallyladenosine(37) in tRNA + diphosphate. Functionally, catalyzes the transfer of a dimethylallyl group onto the adenine at position 37 in tRNAs that read codons beginning with uridine, leading to the formation of N6-(dimethylallyl)adenosine (i(6)A). In Cereibacter sphaeroides (strain KD131 / KCTC 12085) (Rhodobacter sphaeroides), this protein is tRNA dimethylallyltransferase.